Here is a 376-residue protein sequence, read N- to C-terminus: Chaperone protein DnaJ (376 aa).

One can recognise a J domain in the interval 5-70 (DYYEILGVSK…QKRAAYDQYG (66 aa)). The CR-type zinc finger occupies 131 to 209 (GVTKEIRIPT…CHGHGRVERS (79 aa)). Residues Cys144, Cys147, Cys161, Cys164, Cys183, Cys186, Cys197, and Cys200 each contribute to the Zn(2+) site. CXXCXGXG motif repeat units follow at residues 144–151 (CDVCHGSG), 161–168 (CPTCHGSG), 183–190 (CPHCQGRG), and 197–204 (CNKCHGHG).

Belongs to the DnaJ family. As to quaternary structure, homodimer. Zn(2+) serves as cofactor.

Its subcellular location is the cytoplasm. Participates actively in the response to hyperosmotic and heat shock by preventing the aggregation of stress-denatured proteins and by disaggregating proteins, also in an autonomous, DnaK-independent fashion. Unfolded proteins bind initially to DnaJ; upon interaction with the DnaJ-bound protein, DnaK hydrolyzes its bound ATP, resulting in the formation of a stable complex. GrpE releases ADP from DnaK; ATP binding to DnaK triggers the release of the substrate protein, thus completing the reaction cycle. Several rounds of ATP-dependent interactions between DnaJ, DnaK and GrpE are required for fully efficient folding. Also involved, together with DnaK and GrpE, in the DNA replication of plasmids through activation of initiation proteins. This Shigella flexneri serotype 5b (strain 8401) protein is Chaperone protein DnaJ.